A 251-amino-acid chain; its full sequence is Ubiquinone/menaquinone biosynthesis C-methyltransferase UbiE (251 aa).

S-adenosyl-L-methionine contacts are provided by residues threonine 74, aspartate 95, 123–124 (NA), and serine 140.

It belongs to the class I-like SAM-binding methyltransferase superfamily. MenG/UbiE family.

It catalyses the reaction a 2-demethylmenaquinol + S-adenosyl-L-methionine = a menaquinol + S-adenosyl-L-homocysteine + H(+). The catalysed reaction is a 2-methoxy-6-(all-trans-polyprenyl)benzene-1,4-diol + S-adenosyl-L-methionine = a 5-methoxy-2-methyl-3-(all-trans-polyprenyl)benzene-1,4-diol + S-adenosyl-L-homocysteine + H(+). The protein operates within quinol/quinone metabolism; menaquinone biosynthesis; menaquinol from 1,4-dihydroxy-2-naphthoate: step 2/2. It functions in the pathway cofactor biosynthesis; ubiquinone biosynthesis. Methyltransferase required for the conversion of demethylmenaquinol (DMKH2) to menaquinol (MKH2) and the conversion of 2-polyprenyl-6-methoxy-1,4-benzoquinol (DDMQH2) to 2-polyprenyl-3-methyl-6-methoxy-1,4-benzoquinol (DMQH2). This Photorhabdus laumondii subsp. laumondii (strain DSM 15139 / CIP 105565 / TT01) (Photorhabdus luminescens subsp. laumondii) protein is Ubiquinone/menaquinone biosynthesis C-methyltransferase UbiE.